The chain runs to 328 residues: P2Y purinoceptor 3 (328 aa).

Over 1–22 (MSMANFTAGRNSCTFQEEFKQV) the chain is Extracellular. Asn-5 carries an N-linked (GlcNAc...) asparagine glycan. The helical transmembrane segment at 23–43 (LLPLVYSVVFLLGLPLNAVVI) threads the bilayer. The Cytoplasmic portion of the chain corresponds to 44–57 (GQIWLARKALTRTT). Residues 58–78 (IYMLNLATADLLYVCSLPLLI) form a helical membrane-spanning segment. At 79-96 (YNYTQKDYWPFGDFTCKF) the chain is on the extracellular side. A disulfide bond links Cys-94 and Cys-172. A helical membrane pass occupies residues 97–117 (VRFQFYTNLHGSILFLTCISV). Residues 118–139 (QRYMGICHPLASWHKKKGKKLT) lie on the Cytoplasmic side of the membrane. A helical transmembrane segment spans residues 140-160 (WLVCAAVWFIVIAQCLPTFVF). The Extracellular segment spans residues 161–189 (ASTGTQRNRTVCYDLSPPDRSASYFPYGI). Residues 190–210 (TLTITGFLLPFAAILACYCSM) traverse the membrane as a helical segment. Topologically, residues 211 to 231 (ARILCQKDELIGLAVHKKKDK) are cytoplasmic. The helical transmembrane segment at 232 to 252 (AVRMIIIVVIVFSISFFPFHL) threads the bilayer. Topologically, residues 253–275 (TKTIYLIVRSSPTLPCPTLQAFA) are extracellular. A helical membrane pass occupies residues 276 to 298 (IAYKCTRPFASMNSVLDPILFYF). Over 299–323 (TQRKFRESTRYLLDKMSSKWRHDHC) the chain is Cytoplasmic.

This sequence belongs to the G-protein coupled receptor 1 family.

The protein resides in the cell membrane. Functionally, receptor for extracellular UDP &gt; ADP = UTP. The activity of this receptor is mediated by G proteins which activate a phosphatidylinositol-calcium second messenger system. The polypeptide is P2Y purinoceptor 3 (P2RY3) (Meleagris gallopavo (Wild turkey)).